The following is a 291-amino-acid chain: MEMO1 family protein TK1477 (291 aa).

Belongs to the MEMO1 family.

The protein is MEMO1 family protein TK1477 of Thermococcus kodakarensis (strain ATCC BAA-918 / JCM 12380 / KOD1) (Pyrococcus kodakaraensis (strain KOD1)).